Here is a 141-residue protein sequence, read N- to C-terminus: HTH-type transcriptional repressor NsrR (141 aa).

An HTH rrf2-type domain is found at 2-129; that stretch reads QLTSFTDYGL…DNYTLADLVE (128 aa). Residues 28 to 51 constitute a DNA-binding region (H-T-H motif); it reads ISEVTEVYGVSRNHMVKIINQLSR. Residues Cys91, Cys96, and Cys102 each coordinate [2Fe-2S] cluster.

[2Fe-2S] cluster is required as a cofactor.

In terms of biological role, nitric oxide-sensitive repressor of genes involved in protecting the cell against nitrosative stress. May require iron for activity. This Klebsiella pneumoniae subsp. pneumoniae (strain ATCC 700721 / MGH 78578) protein is HTH-type transcriptional repressor NsrR.